Reading from the N-terminus, the 559-residue chain is U-box domain-containing protein 41 (559 aa).

Disordered stretches follow at residues 1–30 and 121–156; these read MGGN…KHDE and RMDK…SPSD. The span at 12 to 24 shows a compositional bias: polar residues; that stretch reads HQRSSSATTTTLP. The region spanning 30-104 is the U-box domain; that stretch reads ETPPEFLCPI…FSWCDRQKVD (75 aa). 5 ARM repeats span residues 266-305, 307-346, 348-388, 390-427, and 428-472; these read EDLR…NLSL, KQNK…SLAL, DENK…HLSL, PSNR…NLAA, and CPDG…TLCQ.

It carries out the reaction S-ubiquitinyl-[E2 ubiquitin-conjugating enzyme]-L-cysteine + [acceptor protein]-L-lysine = [E2 ubiquitin-conjugating enzyme]-L-cysteine + N(6)-ubiquitinyl-[acceptor protein]-L-lysine.. It participates in protein modification; protein ubiquitination. In terms of biological role, functions as an E3 ubiquitin ligase. The polypeptide is U-box domain-containing protein 41 (PUB41) (Arabidopsis thaliana (Mouse-ear cress)).